Reading from the N-terminus, the 59-residue chain is Large ribosomal subunit protein uL30 (59 aa).

This sequence belongs to the universal ribosomal protein uL30 family. Part of the 50S ribosomal subunit.

This Clostridium botulinum (strain ATCC 19397 / Type A) protein is Large ribosomal subunit protein uL30.